The chain runs to 599 residues: Sulfite reductase [NADPH] flavoprotein alpha-component (599 aa).

The Flavodoxin-like domain occupies 64-202 (VTLISASQTG…AASEWRARVV (139 aa)). Residues 70–75 (SQTGNA), 117–120 (STQG), and 153–162 (LGDTSYEFFC) each bind FMN. The 215-residue stretch at 234–448 (DAPLTATLSV…IEHNDNFRLP (215 aa)) folds into the FAD-binding FR-type domain. FAD-binding positions include T322, A356, 386–389 (RLYS), 404–406 (TVG), Y410, and 419–422 (GGAS). NADP(+) contacts are provided by residues 519 to 520 (SR), 525 to 529 (KIYVQ), and D561. Residue Y599 participates in FAD binding.

Belongs to the NADPH-dependent sulphite reductase flavoprotein subunit CysJ family. The protein in the N-terminal section; belongs to the flavodoxin family. This sequence in the C-terminal section; belongs to the flavoprotein pyridine nucleotide cytochrome reductase family. Alpha(8)-beta(8). The alpha component is a flavoprotein, the beta component is a hemoprotein. It depends on FAD as a cofactor. FMN serves as cofactor.

The catalysed reaction is hydrogen sulfide + 3 NADP(+) + 3 H2O = sulfite + 3 NADPH + 4 H(+). It participates in sulfur metabolism; hydrogen sulfide biosynthesis; hydrogen sulfide from sulfite (NADPH route): step 1/1. Component of the sulfite reductase complex that catalyzes the 6-electron reduction of sulfite to sulfide. This is one of several activities required for the biosynthesis of L-cysteine from sulfate. The flavoprotein component catalyzes the electron flow from NADPH -&gt; FAD -&gt; FMN to the hemoprotein component. The sequence is that of Sulfite reductase [NADPH] flavoprotein alpha-component from Salmonella paratyphi A (strain ATCC 9150 / SARB42).